We begin with the raw amino-acid sequence, 371 residues long: Ligninase LG2 (371 aa).

An N-terminal signal peptide occupies residues 1–21 (MAFKQLFAAITVALSLTAANA). Residues 22–28 (AVVKEKR) constitute a propeptide that is removed on maturation. 4 cysteine pairs are disulfide-bonded: Cys31–Cys43, Cys42–Cys313, Cys62–Cys148, and Cys277–Cys345. The active-site Proton acceptor is His75. 4 residues coordinate Ca(2+): Asp76, Gly94, Asp96, and Ser98. Trp199 is modified (3-hydroxytryptophan). His204 serves as a coordination point for heme b. Positions 205, 222, 224, 227, and 229 each coordinate Ca(2+). N-linked (GlcNAc...) asparagine glycosylation occurs at Asn285.

Belongs to the peroxidase family. Ligninase subfamily. Ca(2+) serves as cofactor. Heme b is required as a cofactor.

The enzyme catalyses 1-(3,4-dimethoxyphenyl)-2-(2-methoxyphenoxy)propane-1,3-diol + H2O2 = 3,4-dimethoxybenzaldehyde + guaiacol + glycolaldehyde + H2O. It carries out the reaction 2 (3,4-dimethoxyphenyl)methanol + H2O2 = 2 (3,4-dimethoxyphenyl)methanol radical + 2 H2O. The protein operates within secondary metabolite metabolism; lignin degradation. Depolymerization of lignin. Catalyzes the C(alpha)-C(beta) cleavage of the propyl side chains of lignin. The protein is Ligninase LG2 (GLG2) of Phanerodontia chrysosporium (White-rot fungus).